A 208-amino-acid polypeptide reads, in one-letter code: Putative ribosomal protein uS2-like (208 aa).

This sequence belongs to the universal ribosomal protein uS2 family.

It localises to the plastid. It is found in the chloroplast. This chain is Putative ribosomal protein uS2-like (rps2-2), found in Chlamydomonas reinhardtii (Chlamydomonas smithii).